A 198-amino-acid polypeptide reads, in one-letter code: Recombination protein RecR (198 aa).

A C4-type zinc finger spans residues 57 to 72 (CSVCHNITDTDPCRIC). One can recognise a Toprim domain in the interval 80 to 175 (SVICVVQDAK…KVTRIAHGLP (96 aa)).

It belongs to the RecR family.

Functionally, may play a role in DNA repair. It seems to be involved in an RecBC-independent recombinational process of DNA repair. It may act with RecF and RecO. The protein is Recombination protein RecR of Halalkalibacterium halodurans (strain ATCC BAA-125 / DSM 18197 / FERM 7344 / JCM 9153 / C-125) (Bacillus halodurans).